The chain runs to 404 residues: Probable pectate lyase 18 (404 aa).

The first 20 residues, 1–20 (MSTLFFTFSLLLLAPLLVIS), serve as a signal peptide directing secretion. An N-linked (GlcNAc...) asparagine glycan is attached at asparagine 37. Cysteine 159 and cysteine 178 form a disulfide bridge. An N-linked (GlcNAc...) asparagine glycan is attached at asparagine 191. 4 residues coordinate Ca(2+): aspartate 200, aspartate 202, aspartate 224, and aspartate 228. The active site involves arginine 280.

It belongs to the polysaccharide lyase 1 family. The cofactor is Ca(2+). Predominantly found in the pistil where it is found in the outer five layers of the strands of transmitting tissue within the upper two-thirds of the style. Found at much lower levels in the anthers and vegetative organs.

The protein resides in the secreted. It catalyses the reaction Eliminative cleavage of (1-&gt;4)-alpha-D-galacturonan to give oligosaccharides with 4-deoxy-alpha-D-galact-4-enuronosyl groups at their non-reducing ends.. Its pathway is glycan metabolism; pectin degradation; 2-dehydro-3-deoxy-D-gluconate from pectin: step 2/5. In terms of biological role, may have a role in the development of the transmitting tissue of the style and/or in the events related to pollination such as some aspect in the facilitation of compatible pollen tube growth. The protein is Probable pectate lyase 18 of Solanum lycopersicum (Tomato).